A 215-amino-acid polypeptide reads, in one-letter code: Large ribosomal subunit protein eL15 (215 aa).

The interval 179–215 is disordered; sequence GTVKHKWKKKEKEREQKKRHEATKYYRLQNYDKLPGK. Residues 188–202 are compositionally biased toward basic and acidic residues; it reads KEKEREQKKRHEATK.

The protein belongs to the eukaryotic ribosomal protein eL15 family.

The chain is Large ribosomal subunit protein eL15 from Sulfurisphaera tokodaii (strain DSM 16993 / JCM 10545 / NBRC 100140 / 7) (Sulfolobus tokodaii).